We begin with the raw amino-acid sequence, 1354 residues long: RNA-directed RNA polymerase VP1 (1354 aa).

The catalysed reaction is RNA(n) + a ribonucleoside 5'-triphosphate = RNA(n+1) + diphosphate. RNA-directed RNA polymerase that is involved in transcription and genome replication. Following infection, it catalyzes the synthesis of fully conservative plus strands. After core assembly, which consists in recruitment of one capped plus-strand for each genomic segments and polymerase complexes, the polymerase switches mode and catalyzes the synthesis of complementary minus-strands. The protein is RNA-directed RNA polymerase VP1 of Cryphonectria parasitica mycoreovirus 1 (strain 9B21) (CpMYRV-1).